Consider the following 142-residue polypeptide: Hemoglobin subunit alpha-I/II (142 aa).

The 141-residue stretch at 2-142 (VLSAADKGNV…VSTVLTSKYR (141 aa)) folds into the Globin domain. A Phosphoserine modification is found at S4. 2 positions are modified to N6-succinyllysine: K8 and K12. At K17 the chain carries N6-acetyllysine; alternate. K17 carries the post-translational modification N6-succinyllysine; alternate. Y25 bears the Phosphotyrosine mark. S36 carries the phosphoserine modification. K41 is modified (N6-succinyllysine). S50 carries the post-translational modification Phosphoserine. H59 contacts O2. H88 is a heme b binding site. A Phosphoserine modification is found at S103. The residue at position 109 (T109) is a Phosphothreonine. The residue at position 125 (S125) is a Phosphoserine. Residues T135 and T138 each carry the phosphothreonine modification. At S139 the chain carries Phosphoserine.

This sequence belongs to the globin family. As to quaternary structure, heterotetramer of two alpha chains and two beta chains. Red blood cells.

Involved in oxygen transport from the lung to the various peripheral tissues. This chain is Hemoglobin subunit alpha-I/II, found in Bison bonasus (European bison).